We begin with the raw amino-acid sequence, 319 residues long: Acetyl-coenzyme A carboxylase carboxyl transferase subunit alpha (319 aa).

In terms of domain architecture, CoA carboxyltransferase C-terminal spans 35-296 (NIDEEVQRLR…KTQLLADLED (262 aa)).

The protein belongs to the AccA family. Acetyl-CoA carboxylase is a heterohexamer composed of biotin carboxyl carrier protein (AccB), biotin carboxylase (AccC) and two subunits each of ACCase subunit alpha (AccA) and ACCase subunit beta (AccD).

The protein resides in the cytoplasm. The catalysed reaction is N(6)-carboxybiotinyl-L-lysyl-[protein] + acetyl-CoA = N(6)-biotinyl-L-lysyl-[protein] + malonyl-CoA. It functions in the pathway lipid metabolism; malonyl-CoA biosynthesis; malonyl-CoA from acetyl-CoA: step 1/1. Its function is as follows. Component of the acetyl coenzyme A carboxylase (ACC) complex. First, biotin carboxylase catalyzes the carboxylation of biotin on its carrier protein (BCCP) and then the CO(2) group is transferred by the carboxyltransferase to acetyl-CoA to form malonyl-CoA. This Edwardsiella ictaluri (strain 93-146) protein is Acetyl-coenzyme A carboxylase carboxyl transferase subunit alpha.